The chain runs to 192 residues: Crossover junction endodeoxyribonuclease RuvC (192 aa).

Catalysis depends on residues Asp-8, Glu-67, and Asp-139. Residues Asp-8, Glu-67, and Asp-139 each coordinate Mg(2+).

It belongs to the RuvC family. As to quaternary structure, homodimer which binds Holliday junction (HJ) DNA. The HJ becomes 2-fold symmetrical on binding to RuvC with unstacked arms; it has a different conformation from HJ DNA in complex with RuvA. In the full resolvosome a probable DNA-RuvA(4)-RuvB(12)-RuvC(2) complex forms which resolves the HJ. It depends on Mg(2+) as a cofactor.

Its subcellular location is the cytoplasm. The catalysed reaction is Endonucleolytic cleavage at a junction such as a reciprocal single-stranded crossover between two homologous DNA duplexes (Holliday junction).. Functionally, the RuvA-RuvB-RuvC complex processes Holliday junction (HJ) DNA during genetic recombination and DNA repair. Endonuclease that resolves HJ intermediates. Cleaves cruciform DNA by making single-stranded nicks across the HJ at symmetrical positions within the homologous arms, yielding a 5'-phosphate and a 3'-hydroxyl group; requires a central core of homology in the junction. The consensus cleavage sequence is 5'-(A/T)TT(C/G)-3'. Cleavage occurs on the 3'-side of the TT dinucleotide at the point of strand exchange. HJ branch migration catalyzed by RuvA-RuvB allows RuvC to scan DNA until it finds its consensus sequence, where it cleaves and resolves the cruciform DNA. This chain is Crossover junction endodeoxyribonuclease RuvC, found in Actinobacillus pleuropneumoniae serotype 5b (strain L20).